The primary structure comprises 1030 residues: Semaphorin-6A (1030 aa).

The N-terminal stretch at 1–18 (MRSEALLLYFTLLHFAGA) is a signal peptide. Residues 19 to 649 (GFPEDSEPIS…KGHDQLVPVT (631 aa)) are Extracellular-facing. Positions 24 to 512 (SEPISISHGN…FSTCVIKVPL (489 aa)) constitute a Sema domain. Asn33, Asn49, and Asn65 each carry an N-linked (GlcNAc...) asparagine glycan. Disulfide bonds link Cys107/Cys117, Cys135/Cys144, Cys258/Cys369, and Cys283/Cys328. The N-linked (GlcNAc...) asparagine glycan is linked to Asn282. N-linked (GlcNAc...) asparagine glycans are attached at residues Asn434 and Asn461. Intrachain disulfides connect Cys477–Cys506, Cys515–Cys533, Cys521–Cys568, and Cys525–Cys542. The helical transmembrane segment at 650–670 (LLAIAVILAFVMGAVFSGITV) threads the bilayer. Over 671–1030 (YCVCDHRRKD…TSMKPNDACT (360 aa)) the chain is Cytoplasmic. The residue at position 698 (Ser698) is a Phosphoserine. Disordered regions lie at residues 754–778 (ALPT…REWE), 860–897 (SSKS…SLSQ), and 912–1030 (YGVD…DACT). A compositionally biased stretch (polar residues) spans 920–936 (YPTNSLTRSHQATTLKR). The segment covering 937–952 (NNTNSSNSSHLSRNQS) has biased composition (low complexity). Ser952 carries the phosphoserine modification. 2 stretches are compositionally biased toward polar residues: residues 970–997 (QVHS…SLTR) and 1018–1030 (PLST…DACT).

Belongs to the semaphorin family. In terms of assembly, active as a homodimer or oligomer. The SEMA6A homodimer interacts with a PLXNA2 homodimer, giving rise to a heterotetramer. Interacts with EVL. (Microbial infection) Interacts with P.sordellii toxin TcsL; semaphorins SEMA6A and SEMA6B constitute the major host receptors for TcsL in the vascular endothelium.

The protein localises to the cell membrane. Its function is as follows. Cell surface receptor for PLXNA2 that plays an important role in cell-cell signaling. Required for normal granule cell migration in the developing cerebellum. Promotes reorganization of the actin cytoskeleton and plays an important role in axon guidance in the developing central nervous system. Can act as repulsive axon guidance cue. Has repulsive action towards migrating granular neurons. May play a role in channeling sympathetic axons into the sympathetic chains and controlling the temporal sequence of sympathetic target innervation. (Microbial infection) Acts as a receptor for P.sordellii toxin TcsL in the in the vascular endothelium. In Homo sapiens (Human), this protein is Semaphorin-6A (SEMA6A).